We begin with the raw amino-acid sequence, 368 residues long: Biotin synthase (368 aa).

The 232-residue stretch at 46–277 (VHGDEVALCG…AAHIFVMGGR (232 aa)) folds into the Radical SAM core domain. The [4Fe-4S] cluster site is built by C64, C68, and C71. 3 residues coordinate [2Fe-2S] cluster: S109, C142, and C202. The segment at 347-368 (RAAEPGGKRGLPVVGPPRGGCA) is disordered.

This sequence belongs to the radical SAM superfamily. Biotin synthase family. Homodimer. [4Fe-4S] cluster is required as a cofactor. [2Fe-2S] cluster serves as cofactor.

It catalyses the reaction (4R,5S)-dethiobiotin + (sulfur carrier)-SH + 2 reduced [2Fe-2S]-[ferredoxin] + 2 S-adenosyl-L-methionine = (sulfur carrier)-H + biotin + 2 5'-deoxyadenosine + 2 L-methionine + 2 oxidized [2Fe-2S]-[ferredoxin]. Its pathway is cofactor biosynthesis; biotin biosynthesis; biotin from 7,8-diaminononanoate: step 2/2. In terms of biological role, catalyzes the conversion of dethiobiotin (DTB) to biotin by the insertion of a sulfur atom into dethiobiotin via a radical-based mechanism. This is Biotin synthase from Anaeromyxobacter sp. (strain Fw109-5).